A 173-amino-acid chain; its full sequence is Translation initiation factor IF-3 (173 aa).

Belongs to the IF-3 family. In terms of assembly, monomer.

Its subcellular location is the cytoplasm. In terms of biological role, IF-3 binds to the 30S ribosomal subunit and shifts the equilibrium between 70S ribosomes and their 50S and 30S subunits in favor of the free subunits, thus enhancing the availability of 30S subunits on which protein synthesis initiation begins. The protein is Translation initiation factor IF-3 of Ehrlichia ruminantium (strain Gardel).